The chain runs to 429 residues: MSALRNIKFNEEEDGELPCLVTGEENNLQEILENVSYDGGNIVSDAKVERVNKQVENTSAGATDVHEKKRIPVSIITGYLGSGKSTLLEKIALKGADKKIAVILNEFGDSSEIEKAMTIKNGSNSYQEWLDLGNGCLCCSLKNIGVKAIEDMVERSPGKIDYILLETSGIADPAPIAKMFWQDEGLNSSVYIDGIITVLDCEHILKCLDDISIDAHWHGDKVGLEGNLTIAHFQLAMADRIIMNKYDTIEHSPEMVKQLKERVREINSIAPMFFTKYSDTPIQNLLDIHAYDSVRISDILDSGSGNGTIHDDRMGTIMLTFRPLKNEEEYNNKFIKQFLQPLLWKNFGAMTVLGGRRRDDGRDWEVQRTKGLILIEGENPIARVIQGVRDTYDVFPGKYDGSNKECKIVLIGKYLEKESIEELLRKTLE.

A psi-PxLVp motif motif is present at residues 15–22 (GELPCLVT). 78–85 (GYLGSGKS) contacts GTP. Cys-136, Cys-138, and Cys-139 together coordinate Zn(2+). The short motif at 136-139 (CLCC) is the CXCC motif element. GTP-binding positions include 139 to 143 (CSLKN) and 244 to 247 (NKYD). Positions 362–428 (RDWEVQRTKG…SIEELLRKTL (67 aa)) constitute a CobW C-terminal domain.

The protein belongs to the SIMIBI class G3E GTPase family. ZNG1 subfamily.

The catalysed reaction is GTP + H2O = GDP + phosphate + H(+). Its function is as follows. Zinc chaperone that directly transfers zinc cofactor to target metalloproteins, thereby activating them. Catalyzes zinc insertion into the active site of methionine aminopeptidase MAP1, which function to cleave the initiator methionine from polypeptides during or after protein translation. Mechanistically, the N-terminal psi-PxLVp motif binds to the C6H2-type zinc finger of inactive form of MAP1. After formation of the docked complex, zinc is transferred from the CXCC motif in the GTPase domain of ZNG1 to the zinc binding site in the peptidase domain of MAP1 in a process requiring GTP hydrolysis. GTP/GDP exchange is required for release of active MAP1. The chain is Zinc-regulated GTPase metalloprotein activator 1 from Saccharomyces cerevisiae (strain ATCC 204508 / S288c) (Baker's yeast).